The sequence spans 147 residues: Ribonuclease H (147 aa).

Residues Met1–Thr142 form the RNase H type-1 domain. Positions 10, 48, 70, and 134 each coordinate Mg(2+).

This sequence belongs to the RNase H family. In terms of assembly, monomer. Mg(2+) serves as cofactor.

Its subcellular location is the cytoplasm. The catalysed reaction is Endonucleolytic cleavage to 5'-phosphomonoester.. Functionally, endonuclease that specifically degrades the RNA of RNA-DNA hybrids. This chain is Ribonuclease H, found in Nitrosococcus oceani (strain ATCC 19707 / BCRC 17464 / JCM 30415 / NCIMB 11848 / C-107).